A 239-amino-acid chain; its full sequence is Lytic polysaccharide monooxygenase-like protein X325 (239 aa).

Positions methionine 1–alanine 24 are cleaved as a signal peptide. Histidine 25 contacts Cu(2+). Residues asparagine 41, asparagine 56, asparagine 79, asparagine 117, asparagine 150, and asparagine 197 are each glycosylated (N-linked (GlcNAc...) asparagine). Intrachain disulfides connect cysteine 71–cysteine 176 and cysteine 141–cysteine 195. Serine 214 is lipidated: GPI-anchor amidated serine. The propeptide at alanine 215–methionine 239 is removed in mature form.

This sequence belongs to the X325 family. Requires Cu(2+) as cofactor.

Its subcellular location is the cell membrane. Lytic polysaccharide monooxygenase-like protein that has diverged to biological functions other than polysaccharide degradation since it does not perform oxidative cleavage of polysaccharides. Acts as a cell surface-bound protein that functions in the copper-accumulation pathway. May also act as the major cell wall sensor that regulates MAP kinase-dependent hyphal anastomosis, the fusion of hyphal cells. In Aspergillus fumigatus (strain ATCC MYA-4609 / CBS 101355 / FGSC A1100 / Af293) (Neosartorya fumigata), this protein is Lytic polysaccharide monooxygenase-like protein X325.